The following is a 732-amino-acid chain: Prolyl endopeptidase-like (732 aa).

Residues serine 575, aspartate 661, and histidine 707 each act as charge relay system in the active site.

This sequence belongs to the peptidase S9A family. Homodimer.

The protein resides in the cytoplasm. The protein localises to the cytosol. In terms of biological role, serine peptidase whose precise substrate specificity remains unclear. Does not cleave peptides after a arginine or lysine residue. Regulates trans-Golgi network morphology and sorting by regulating the membrane binding of the AP-1 complex. May play a role in the regulation of synaptic vesicle exocytosis. The polypeptide is Prolyl endopeptidase-like (PREPL) (Gallus gallus (Chicken)).